The following is a 427-amino-acid chain: 3-phosphoshikimate 1-carboxyvinyltransferase (427 aa).

Lys-22, Ser-23, and Arg-27 together coordinate 3-phosphoshikimate. Lys-22 lines the phosphoenolpyruvate pocket. Residues Gly-96 and Arg-124 each coordinate phosphoenolpyruvate. Ser-169, Ser-170, Gln-171, Ser-197, Asp-313, Asn-336, and Lys-340 together coordinate 3-phosphoshikimate. Phosphoenolpyruvate is bound at residue Gln-171. Asp-313 acts as the Proton acceptor in catalysis. Phosphoenolpyruvate is bound by residues Arg-344, Arg-386, and Lys-411.

It belongs to the EPSP synthase family. As to quaternary structure, monomer.

It is found in the cytoplasm. It catalyses the reaction 3-phosphoshikimate + phosphoenolpyruvate = 5-O-(1-carboxyvinyl)-3-phosphoshikimate + phosphate. It participates in metabolic intermediate biosynthesis; chorismate biosynthesis; chorismate from D-erythrose 4-phosphate and phosphoenolpyruvate: step 6/7. In terms of biological role, catalyzes the transfer of the enolpyruvyl moiety of phosphoenolpyruvate (PEP) to the 5-hydroxyl of shikimate-3-phosphate (S3P) to produce enolpyruvyl shikimate-3-phosphate and inorganic phosphate. The protein is 3-phosphoshikimate 1-carboxyvinyltransferase of Salmonella heidelberg (strain SL476).